We begin with the raw amino-acid sequence, 963 residues long: MATAAATSASEPEAESKAGPKADGEEDEVKAARTRRKVLSRAVAAATYKTMGPGWDQQEEGVSESDGDEYAMASSAESSPGEYEWEYDEEEEKNQLEIERLEEQLSINVYDYNCHVDLIRLLRLEGELTKVRMARQKMSEIFPLTEELWLEWLHDEISMAQDGLDREHVYDLFEKAVKDYICPNIWLEYGQYSVGGIGQKGGLEKVRSVFERALSSVGLHMSKGLALWEAYREFESAIVEAARLEKVHSLFRRQLAIPLYDMEATFAEYEEWSEDPIPESVIQNYNKALQQLEKYKPYEEALLQAEAPRLAEYQAYIDFEMKIGDPARIQLIFERALVENCLVPDLWIRYSQYLDRQLKVKDLVLSVHNRAIRNCPWTVALWSRYLLAMERHGVDHQVISVTFEKALNAGFIQATDYVEIWQAYLDYLRRRVDFKQDSSKELEELRAAFTRALEYLKQEVEERFNESGDPSCVIMQNWARIEARLCNNMQKARELWDSIMTRGNAKYANMWLEYYNLERAHGDTQHCRKALHRAVQCTSDYPEHVCEVLLTMERTEGSLEDWDIAVQKTETRLARVNEQRMKAAEKEAALVQQEEEKAEQRKRARAEKKALKKKKKIRGPEKRGADEDDEKEWGDDEEEQPSKRRRVENSIPAAGETQNVEVAPGPAGKCAAVDVEPPSKQKEKAASLKRDMPKVLHDSSKDSITVFVSNLPYSMQEPDAKLRPLFEACGEVVQIRPIFSNRGDFRGYCYVEFKEEKSALQALEMDRKSVEGRPMFVSPCVDKSKNPDFKVFRYSTSLEKHKLFISGLPFSCTKEELEEICKAHGTVKDLRLVTNRAGKPKGLAYVEYENESQASQAVMKMDGMTIKENVIKVAISNPPQRKVPEKPETRKAPGGPTLLPQTYGARGKGRTQLSLLPRALQRPGAAAPQAENGPAAAPAVAAPAATEAPKMSNADFAKLFLRK.

Residues 1–11 are compositionally biased toward low complexity; sequence MATAAATSASE. Disordered stretches follow at residues 1 to 36 and 49 to 86; these read MATAAATSASEPEAESKAGPKADGEEDEVKAARTRR and KTMGPGWDQQEEGVSESDGDEYAMASSAESSPGEYEWE. An N-acetylalanine modification is found at alanine 2. The mediates interaction with PRPF3 stretch occupies residues 2–351; sequence ATAAATSASE…LVPDLWIRYS (350 aa). Phosphoserine is present on residues serine 10 and serine 16. Positions 14 to 23 are enriched in basic and acidic residues; sequence AESKAGPKAD. Positions 21–46 form a coiled coil; that stretch reads KADGEEDEVKAARTRRKVLSRAVAAA. Over residues 57 to 69 the composition is skewed to acidic residues; the sequence is QQEEGVSESDGDE. Positions 82-110 form a coiled coil; the sequence is EYEWEYDEEEEKNQLEIERLEEQLSINVY. 8 HAT repeats span residues 126-158, 164-195, 201-237, 242-275, 324-356, 359-391, 394-430, and 487-520; these read GELTKVRMARQKMSEIFPLTEELWLEWLHDEIS, LDREHVYDLFEKAVKDYICPNIWLEYGQYSVG, GGLEKVRSVFERALSSVGLHMSKGLALWEAYREFESA, ARLEKVHSLFRRQLAIPLYDMEATFAEYEEWSED, GDPARIQLIFERALVENCLVPDLWIRYSQYLDR, KVKDLVLSVHNRAIRNCPWTVALWSRYLLAMER, VDHQVISVTFEKALNAGFIQATDYVEIWQAYLDYLRR, and NNMQKARELWDSIMTRGNAKYANMWLEYYNLERA. A Phosphoserine modification is found at serine 215. Residues 487 to 520 are required for interaction with USP4; that stretch reads NNMQKARELWDSIMTRGNAKYANMWLEYYNLERA. The tract at residues 537 to 953 is necessary and sufficient for U6 snRNA binding; the sequence is CTSDYPEHVC…AATEAPKMSN (417 aa). Residues 559–619 adopt a coiled-coil conformation; it reads LEDWDIAVQK…ALKKKKKIRG (61 aa). The tract at residues 600-670 is required for nuclear localization; the sequence is QRKRARAEKK…EVAPGPAGKC (71 aa). A Nuclear localization signal motif is present at residues 601-608; it reads RKRARAEK. The segment covering 608–619 has biased composition (basic and acidic residues); it reads KKALKKKKKIRG. A disordered region spans residues 608–712; it reads KKALKKKKKI…SITVFVSNLP (105 aa). Basic residues predominate over residues 620–635; it reads PEKRGADEDDEKEWGD. Positions 644–657 are enriched in acidic residues; sequence RRRVENSIPAAGET. Phosphoserine is present on serine 650. Threonine 657 is subject to Phosphothreonine. Residues 695 to 712 are compositionally biased toward basic and acidic residues; the sequence is VLHDSSKDSITVFVSNLP. The RRM 1 domain maps to 704–782; it reads ITVFVSNLPY…RPMFVSPCVD (79 aa). Residues serine 769, serine 795, and serine 852 each carry the phosphoserine modification. The region spanning 801–878 is the RRM 2 domain; the sequence is HKLFISGLPF…NVIKVAISNP (78 aa). The span at 900–909 shows a compositional bias: basic and acidic residues; sequence PQTYGARGKG. Omega-N-methylarginine is present on arginine 906.

Component of the 7SK snRNP complex at least composed of P-TEFb (composed of CDK9 and CCNT1/cyclin-T1), HEXIM1, HEXIM2, BCDIN3, SART3 proteins and 7SK and U6 snRNAs. Interacts with AGO1 and AGO2. Interacts with PRPF3 and USP4; the interaction with PRPF3 is direct and recruits USP4 to its substrate PRPF3. Interacts with USP15; the interaction is direct.

The protein localises to the nucleus. The protein resides in the nucleoplasm. It localises to the cajal body. Its subcellular location is the nucleus speckle. It is found in the cytoplasm. In terms of biological role, U6 snRNP-binding protein that functions as a recycling factor of the splicing machinery. Promotes the initial reassembly of U4 and U6 snRNPs following their ejection from the spliceosome during its maturation. Also binds U6atac snRNPs and may function as a recycling factor for U4atac/U6atac spliceosomal snRNP, an initial step in the assembly of U12-type spliceosomal complex. The U12-type spliceosomal complex plays a role in the splicing of introns with non-canonical splice sites. May also function as a substrate-targeting factor for deubiquitinases like USP4 and USP15. Recruits USP4 to ubiquitinated PRPF3 within the U4/U5/U6 tri-snRNP complex, promoting PRPF3 deubiquitination and thereby regulating the spliceosome U4/U5/U6 tri-snRNP spliceosomal complex disassembly. May also recruit the deubiquitinase USP15 to histone H2B and mediate histone deubiquitination, thereby regulating gene expression and/or DNA repair. May play a role in hematopoiesis probably through transcription regulation of specific genes including MYC. In Pongo abelii (Sumatran orangutan), this protein is Spliceosome associated factor 3, U4/U6 recycling protein.